Here is a 526-residue protein sequence, read N- to C-terminus: Light-independent protochlorophyllide reductase subunit B (526 aa).

Aspartate 36 is a [4Fe-4S] cluster binding site. Aspartate 290 functions as the Proton donor in the catalytic mechanism. Residue 425–426 (GL) participates in substrate binding.

It belongs to the ChlB/BchB/BchZ family. In terms of assembly, protochlorophyllide reductase is composed of three subunits; ChlL, ChlN and ChlB. Forms a heterotetramer of two ChlB and two ChlN subunits. Requires [4Fe-4S] cluster as cofactor.

The catalysed reaction is chlorophyllide a + oxidized 2[4Fe-4S]-[ferredoxin] + 2 ADP + 2 phosphate = protochlorophyllide a + reduced 2[4Fe-4S]-[ferredoxin] + 2 ATP + 2 H2O. The protein operates within porphyrin-containing compound metabolism; chlorophyll biosynthesis (light-independent). Its function is as follows. Component of the dark-operative protochlorophyllide reductase (DPOR) that uses Mg-ATP and reduced ferredoxin to reduce ring D of protochlorophyllide (Pchlide) to form chlorophyllide a (Chlide). This reaction is light-independent. The NB-protein (ChlN-ChlB) is the catalytic component of the complex. This is Light-independent protochlorophyllide reductase subunit B from Prochlorococcus marinus (strain MIT 9515).